A 651-amino-acid polypeptide reads, in one-letter code: LEAF RUST 10 DISEASE-RESISTANCE LOCUS RECEPTOR-LIKE PROTEIN KINASE-like 1.2 (651 aa).

Residues 1–26 form the signal peptide; it reads MNPSTPSLLYTSIFFYFTIIATQTLS. The Extracellular portion of the chain corresponds to 27–264; sequence LDPKFKACEP…NDKRRRVIVK (238 aa). N-linked (GlcNAc...) asparagine glycosylation is found at N88, N114, N130, N136, N155, N193, and N213. The helical transmembrane segment at 265–285 threads the bilayer; sequence VLIGASAAVVGLIAASIFWYV. Residues 286-651 are Cytoplasmic-facing; it reads YHRRKTKSYR…DSVIVKWDSK (366 aa). The region spanning 341–613 is the Protein kinase domain; that stretch reads FDPSKELGDG…PCMSHVQDTL (273 aa). Residues 347 to 355 and K369 contribute to the ATP site; that span reads LGDGGFGTV. Y415 is subject to Phosphotyrosine. Catalysis depends on D465, which acts as the Proton acceptor. S498 carries the phosphoserine modification. A phosphothreonine mark is found at T499 and T504. Phosphotyrosine is present on Y512.

This sequence belongs to the protein kinase superfamily. Ser/Thr protein kinase family.

Its subcellular location is the cell membrane. The protein localises to the membrane. It catalyses the reaction L-seryl-[protein] + ATP = O-phospho-L-seryl-[protein] + ADP + H(+). The catalysed reaction is L-threonyl-[protein] + ATP = O-phospho-L-threonyl-[protein] + ADP + H(+). Its function is as follows. Probable receptor-like serine/threonine-protein kinase involved in abscisic acid (ABA) signaling. Acts as a positive regulator of abiotic stress response. This Arabidopsis thaliana (Mouse-ear cress) protein is LEAF RUST 10 DISEASE-RESISTANCE LOCUS RECEPTOR-LIKE PROTEIN KINASE-like 1.2.